The primary structure comprises 89 residues: Putative regulatory protein Dalk_1931 (89 aa).

It belongs to the RemA family.

This chain is Putative regulatory protein Dalk_1931, found in Desulfatibacillum aliphaticivorans.